We begin with the raw amino-acid sequence, 239 residues long: Probable transcriptional regulatory protein BT9727_0453 (239 aa).

The protein belongs to the TACO1 family. YeeN subfamily.

It is found in the cytoplasm. The polypeptide is Probable transcriptional regulatory protein BT9727_0453 (Bacillus thuringiensis subsp. konkukian (strain 97-27)).